The following is a 295-amino-acid chain: Cyclic dipyrimidine nucleotide synthase CdnE (295 aa).

The segment at Met-1–Glu-28 is disordered. Residues Asp-7–Ser-19 are compositionally biased toward polar residues. Gln-51 and Ser-53 together coordinate UTP. Asp-67 lines the Mg(2+) pocket. UTP is bound by residues Lys-123, Asn-169, Arg-197, Phe-217, and Lys-276. Positions Arg-275–Trp-277 match the Pyrimidine specificity motif (R/Q)xW in donor pocket motif.

It belongs to the CD-NTase family. E02 subfamily. Monomer. The cofactor is Mg(2+).

The catalysed reaction is 2 UTP = c-di-UMP + 2 diphosphate. It catalyses the reaction UTP + CTP = cyclic CMP-UMP + 2 diphosphate. Functionally, cyclic nucleotide synthase (second messenger synthase) of a CBASS antivirus system. CBASS (cyclic oligonucleotide-based antiphage signaling system) provides immunity against bacteriophage. The CD-NTase protein synthesizes cyclic nucleotides in response to infection; these serve as specific second messenger signals. The signals activate a diverse range of effectors, leading to bacterial cell death and thus abortive phage infection. A type I-B(UU) CBASS system. This is Cyclic dipyrimidine nucleotide synthase CdnE from Cecembia lonarensis (strain CCUG 58316 / KCTC 22772 / LW9).